The sequence spans 393 residues: Riboflavin biosynthesis protein RibBA (393 aa).

Positions M1–K200 are DHBP synthase. Residues R27–E28, D32, R139–T143, and E163 contribute to the D-ribulose 5-phosphate site. A Mg(2+)-binding site is contributed by E28. Position 142 (H142) interacts with Mg(2+). Residues L201–I393 form a GTP cyclohydrolase II region. Residue R249 to A253 coordinates GTP. Positions 254, 265, and 267 each coordinate Zn(2+). Residues Q270, E291 to R293, and T313 each bind GTP. D325 serves as the catalytic Proton acceptor; for GTP cyclohydrolase activity. R327 acts as the Nucleophile; for GTP cyclohydrolase activity in catalysis. Residues S348 and K353 each coordinate GTP.

In the N-terminal section; belongs to the DHBP synthase family. It in the C-terminal section; belongs to the GTP cyclohydrolase II family. Mg(2+) serves as cofactor. Mn(2+) is required as a cofactor. Requires Zn(2+) as cofactor.

It carries out the reaction D-ribulose 5-phosphate = (2S)-2-hydroxy-3-oxobutyl phosphate + formate + H(+). The enzyme catalyses GTP + 4 H2O = 2,5-diamino-6-hydroxy-4-(5-phosphoribosylamino)-pyrimidine + formate + 2 phosphate + 3 H(+). It participates in cofactor biosynthesis; riboflavin biosynthesis; 2-hydroxy-3-oxobutyl phosphate from D-ribulose 5-phosphate: step 1/1. The protein operates within cofactor biosynthesis; riboflavin biosynthesis; 5-amino-6-(D-ribitylamino)uracil from GTP: step 1/4. Catalyzes the conversion of D-ribulose 5-phosphate to formate and 3,4-dihydroxy-2-butanone 4-phosphate. Its function is as follows. Catalyzes the conversion of GTP to 2,5-diamino-6-ribosylamino-4(3H)-pyrimidinone 5'-phosphate (DARP), formate and pyrophosphate. The chain is Riboflavin biosynthesis protein RibBA from Staphylococcus aureus (strain MRSA252).